Consider the following 218-residue polypeptide: tRNA (guanine-N(7)-)-methyltransferase (218 aa).

S-adenosyl-L-methionine-binding residues include E46, E71, D98, and D120. D120 is an active-site residue. K124 contributes to the substrate binding site. The interval 126-131 (RHEKRR) is interaction with RNA. Residues D156 and 196–199 (TEYE) each bind substrate.

The protein belongs to the class I-like SAM-binding methyltransferase superfamily. TrmB family.

It carries out the reaction guanosine(46) in tRNA + S-adenosyl-L-methionine = N(7)-methylguanosine(46) in tRNA + S-adenosyl-L-homocysteine. It functions in the pathway tRNA modification; N(7)-methylguanine-tRNA biosynthesis. Its function is as follows. Catalyzes the formation of N(7)-methylguanine at position 46 (m7G46) in tRNA. The sequence is that of tRNA (guanine-N(7)-)-methyltransferase from Lactobacillus johnsonii (strain CNCM I-12250 / La1 / NCC 533).